We begin with the raw amino-acid sequence, 473 residues long: Lactococcin A secretion protein LcnD-like (473 aa).

At 1–21 (MFDKKLLESSELYDKRYRNFS) the chain is on the cytoplasmic side. A helical membrane pass occupies residues 22-44 (TLIILPLFILLVGGVIFTFFAHK). The Extracellular portion of the chain corresponds to 45-473 (ELTVISTGSI…FLDKIMGRTS (429 aa)).

It belongs to the membrane fusion protein (MFP) (TC 8.A.1) family.

Its subcellular location is the cell membrane. Its function is as follows. Involved in the secretion of a lactococcin. The sequence is that of Lactococcin A secretion protein LcnD-like (lcnD) from Lactococcus lactis subsp. lactis (strain IL1403) (Streptococcus lactis).